A 370-amino-acid polypeptide reads, in one-letter code: 5-hydroxytryptamine receptor 5B (370 aa).

The interval 1-36 (MEVSNLSGATPGIAFPPGPESCSDSPSSGRSMGSTP) is disordered. The Extracellular segment spans residues 1-48 (MEVSNLSGATPGIAFPPGPESCSDSPSSGRSMGSTPGGLILSGREPPF). A glycan (N-linked (GlcNAc...) asparagine) is linked at N5. A compositionally biased stretch (low complexity) spans 20 to 36 (ESCSDSPSSGRSMGSTP). The helical transmembrane segment at 49–75 (SAFTVLVVTLLVLLIAATFLWNLLVLV) threads the bilayer. Residues 76–88 (TILRVRAFHRVPH) are Cytoplasmic-facing. A helical transmembrane segment spans residues 89-115 (NLVASTAVSDVLVAALVMPLSLVSELS). Residues 116 to 127 (AGRRWQLGRSLC) are Extracellular-facing. C127 and C205 are disulfide-bonded. A helical transmembrane segment spans residues 128–150 (HVWISFDVLCCTASIWNVAAIAL). D134 lines the serotonin pocket. At 151 to 168 (DRYWTITRHLQYTLRTRR) the chain is on the cytoplasmic side. A helical transmembrane segment spans residues 169 to 189 (RASALMIAITWALSALIALAP). Residues 190-211 (LLFGWGEAYDARLQRCQVSQEP) are Extracellular-facing. A helical transmembrane segment spans residues 212 to 233 (SYAVFSTCGAFYVPLAVVLFVY). Residues 234–300 (WKIYKAAKFR…QKEKRAAMMV (67 aa)) are Cytoplasmic-facing. Residues 301–325 (GILIGVFVLCWIPFFLTELVSPLCA) form a helical membrane-spanning segment. Residues 326 to 327 (CS) are Extracellular-facing. The helical transmembrane segment at 328–352 (LPPIWKSIFLWLGYSNSFFNPLIYT) threads the bilayer. Topologically, residues 353–370 (AFNKNYNNAFKSLFTKQR) are cytoplasmic.

Belongs to the G-protein coupled receptor 1 family. As to expression, brain; in the CA1 region of hippocampus, the medial habenula, and raphe nuclei.

It localises to the cell membrane. Its function is as follows. G-protein coupled receptor for 5-hydroxytryptamine (serotonin), a biogenic hormone that functions as a neurotransmitter, a hormone and a mitogen. Also functions as a receptor for ergot alkaloid derivatives and other psychoactive substances. Ligand binding causes a conformation change that triggers signaling via guanine nucleotide-binding proteins (G proteins) and modulates the activity of downstream effectors. Htr5b is coupled to G(i)/G(o) G alpha proteins and mediates inhibitory neurotransmission: signaling inhibits adenylate cyclase activity and activates a phosphatidylinositol-calcium second messenger system that regulates the release of Ca(2+) ions from intracellular stores. The polypeptide is 5-hydroxytryptamine receptor 5B (Rattus norvegicus (Rat)).